Consider the following 966-residue polypeptide: Alpha-1,4 glucan phosphorylase L-1 isozyme, chloroplastic/amyloplastic (966 aa).

A chloroplast-targeting transit peptide spans 1-50 (MATANGAHLFNHYSSNSRFIHFTSRNTSSKLFLTKTSHFRRPKRCFHVNN). N6-(pyridoxal phosphate)lysine is present on Lys812.

The protein belongs to the glycogen phosphorylase family. Requires pyridoxal 5'-phosphate as cofactor. In terms of tissue distribution, tuber.

Its subcellular location is the plastid. It localises to the chloroplast. The protein localises to the amyloplast. The enzyme catalyses [(1-&gt;4)-alpha-D-glucosyl](n) + phosphate = [(1-&gt;4)-alpha-D-glucosyl](n-1) + alpha-D-glucose 1-phosphate. In terms of biological role, phosphorylase is an important allosteric enzyme in carbohydrate metabolism. Enzymes from different sources differ in their regulatory mechanisms and in their natural substrates. However, all known phosphorylases share catalytic and structural properties. The protein is Alpha-1,4 glucan phosphorylase L-1 isozyme, chloroplastic/amyloplastic of Solanum tuberosum (Potato).